The sequence spans 345 residues: Dihydroorotate dehydrogenase (quinone) (345 aa).

FMN contacts are provided by residues 65-69 (AGLDK) and Thr89. Lys69 is a binding site for substrate. Residue 114-118 (NRMGF) coordinates substrate. Residues Asn142 and Asn175 each coordinate FMN. Asn175 serves as a coordination point for substrate. The active-site Nucleophile is the Ser178. Residue Asn180 participates in substrate binding. FMN contacts are provided by Lys220 and Thr248. 249–250 (NT) provides a ligand contact to substrate. Residues Gly271, Gly300, and 321–322 (YT) each bind FMN.

It belongs to the dihydroorotate dehydrogenase family. Type 2 subfamily. Monomer. It depends on FMN as a cofactor.

Its subcellular location is the cell membrane. It catalyses the reaction (S)-dihydroorotate + a quinone = orotate + a quinol. It functions in the pathway pyrimidine metabolism; UMP biosynthesis via de novo pathway; orotate from (S)-dihydroorotate (quinone route): step 1/1. Functionally, catalyzes the conversion of dihydroorotate to orotate with quinone as electron acceptor. The sequence is that of Dihydroorotate dehydrogenase (quinone) from Burkholderia thailandensis (strain ATCC 700388 / DSM 13276 / CCUG 48851 / CIP 106301 / E264).